A 391-amino-acid chain; its full sequence is Carbamoyl phosphate synthase small chain (391 aa).

Residues 1-202 (MTQPAILVLE…AHASAGSGEE (202 aa)) form a CPSase region. S47, G254, and G256 together coordinate L-glutamine. In terms of domain architecture, Glutamine amidotransferase type-1 spans 206–391 (KVVAYDYGVK…RFVDLMAARA (186 aa)). The Nucleophile role is filled by C282. Residues L283, Q286, N324, G326, and F327 each contribute to the L-glutamine site. Catalysis depends on residues H366 and E368.

It belongs to the CarA family. In terms of assembly, composed of two chains; the small (or glutamine) chain promotes the hydrolysis of glutamine to ammonia, which is used by the large (or ammonia) chain to synthesize carbamoyl phosphate. Tetramer of heterodimers (alpha,beta)4.

It carries out the reaction hydrogencarbonate + L-glutamine + 2 ATP + H2O = carbamoyl phosphate + L-glutamate + 2 ADP + phosphate + 2 H(+). The catalysed reaction is L-glutamine + H2O = L-glutamate + NH4(+). It functions in the pathway amino-acid biosynthesis; L-arginine biosynthesis; carbamoyl phosphate from bicarbonate: step 1/1. Its pathway is pyrimidine metabolism; UMP biosynthesis via de novo pathway; (S)-dihydroorotate from bicarbonate: step 1/3. Functionally, small subunit of the glutamine-dependent carbamoyl phosphate synthetase (CPSase). CPSase catalyzes the formation of carbamoyl phosphate from the ammonia moiety of glutamine, carbonate, and phosphate donated by ATP, constituting the first step of 2 biosynthetic pathways, one leading to arginine and/or urea and the other to pyrimidine nucleotides. The small subunit (glutamine amidotransferase) binds and cleaves glutamine to supply the large subunit with the substrate ammonia. In Xanthomonas axonopodis pv. citri (strain 306), this protein is Carbamoyl phosphate synthase small chain.